The following is a 173-amino-acid chain: Soluble secreted antigen MPT53 (173 aa).

The signal sequence occupies residues 1 to 38 (MSLRLVSPIKAFADGIVAVAIAVVLMFGLANTPRAVAA). Cysteine 73 and cysteine 76 are disulfide-bonded.

This sequence belongs to the thioredoxin family.

The protein localises to the secreted. Its function is as follows. Disulfide oxidoreductase that catalyzes the oxidation of reduced, unfolded secreted proteins to form disulfide bonds. Despite a weak homology to thioredoxin this cannot serve as a substrate for thioredoxin reductase. The polypeptide is Soluble secreted antigen MPT53 (mpt53) (Mycobacterium bovis (strain ATCC BAA-935 / AF2122/97)).